A 382-amino-acid chain; its full sequence is G2/mitotic-specific cyclin-B2 (382 aa).

Residues 1 to 12 (MSSVEAVTQQQL) show a composition bias toward polar residues. Residues 1–78 (MSSVEAVTQQ…HTSAGDPAPI (78 aa)) are disordered. The span at 38 to 47 (NRNAAAAANR) shows a compositional bias: low complexity.

This sequence belongs to the cyclin family. Cyclin AB subfamily. In terms of assembly, interacts with the CDK1 protein kinase to form a serine/threonine kinase holoenzyme complex also known as maturation promoting factor (MPF). The cyclin subunit imparts substrate specificity to the complex.

Its function is as follows. Essential for the control of the cell cycle at the G2/M (mitosis) transition. The polypeptide is G2/mitotic-specific cyclin-B2 (ccnb2) (Oryzias javanicus (Javanese ricefish)).